The sequence spans 150 residues: Ribosome maturation factor RimP (150 aa).

Belongs to the RimP family.

The protein resides in the cytoplasm. Required for maturation of 30S ribosomal subunits. The sequence is that of Ribosome maturation factor RimP from Yersinia pestis bv. Antiqua (strain Antiqua).